A 642-amino-acid polypeptide reads, in one-letter code: Threonine--tRNA ligase (642 aa).

The region spanning 1–63 (MSEIVVTLPD…TDDCELVIVT (63 aa)) is the TGS domain. A catalytic region spans residues 242–533 (DHRKLGQELD…LIEHFDGNFP (292 aa)). Cysteine 334, histidine 385, and histidine 510 together coordinate Zn(2+).

Belongs to the class-II aminoacyl-tRNA synthetase family. In terms of assembly, homodimer. Requires Zn(2+) as cofactor.

It localises to the cytoplasm. The catalysed reaction is tRNA(Thr) + L-threonine + ATP = L-threonyl-tRNA(Thr) + AMP + diphosphate + H(+). In terms of biological role, catalyzes the attachment of threonine to tRNA(Thr) in a two-step reaction: L-threonine is first activated by ATP to form Thr-AMP and then transferred to the acceptor end of tRNA(Thr). The sequence is that of Threonine--tRNA ligase from Natronomonas pharaonis (strain ATCC 35678 / DSM 2160 / CIP 103997 / JCM 8858 / NBRC 14720 / NCIMB 2260 / Gabara) (Halobacterium pharaonis).